The following is a 485-amino-acid chain: Glutamyl-tRNA(Gln) amidotransferase subunit A (485 aa).

Catalysis depends on charge relay system residues Lys74 and Ser149. Ser173 (acyl-ester intermediate) is an active-site residue.

The protein belongs to the amidase family. GatA subfamily. As to quaternary structure, heterotrimer of A, B and C subunits.

It catalyses the reaction L-glutamyl-tRNA(Gln) + L-glutamine + ATP + H2O = L-glutaminyl-tRNA(Gln) + L-glutamate + ADP + phosphate + H(+). Functionally, allows the formation of correctly charged Gln-tRNA(Gln) through the transamidation of misacylated Glu-tRNA(Gln) in organisms which lack glutaminyl-tRNA synthetase. The reaction takes place in the presence of glutamine and ATP through an activated gamma-phospho-Glu-tRNA(Gln). The sequence is that of Glutamyl-tRNA(Gln) amidotransferase subunit A from Janthinobacterium sp. (strain Marseille) (Minibacterium massiliensis).